A 392-amino-acid polypeptide reads, in one-letter code: Histidinol-phosphate aminotransferase 2 (392 aa).

Lysine 228 is modified (N6-(pyridoxal phosphate)lysine).

The protein belongs to the class-II pyridoxal-phosphate-dependent aminotransferase family. Histidinol-phosphate aminotransferase subfamily. As to quaternary structure, homodimer. Pyridoxal 5'-phosphate serves as cofactor.

The enzyme catalyses L-histidinol phosphate + 2-oxoglutarate = 3-(imidazol-4-yl)-2-oxopropyl phosphate + L-glutamate. It participates in amino-acid biosynthesis; L-histidine biosynthesis; L-histidine from 5-phospho-alpha-D-ribose 1-diphosphate: step 7/9. The chain is Histidinol-phosphate aminotransferase 2 from Nitrosospira multiformis (strain ATCC 25196 / NCIMB 11849 / C 71).